Here is a 529-residue protein sequence, read N- to C-terminus: Peptide chain release factor 3 (529 aa).

The tr-type G domain occupies 11-280 (AKRRTFAIIS…GLVAWAPAPM (270 aa)). Residues 20-27 (SHPDAGKT), 88-92 (DTPGH), and 142-145 (NKLD) each bind GTP.

The protein belongs to the TRAFAC class translation factor GTPase superfamily. Classic translation factor GTPase family. PrfC subfamily.

It is found in the cytoplasm. In terms of biological role, increases the formation of ribosomal termination complexes and stimulates activities of RF-1 and RF-2. It binds guanine nucleotides and has strong preference for UGA stop codons. It may interact directly with the ribosome. The stimulation of RF-1 and RF-2 is significantly reduced by GTP and GDP, but not by GMP. The sequence is that of Peptide chain release factor 3 from Edwardsiella ictaluri (strain 93-146).